Consider the following 420-residue polypeptide: Transcriptional adapter 2-beta (420 aa).

A ZZ-type zinc finger spans residues 4-59 (LSKKYCVYCLADVTSLRLRCTECQDIELCTDCFSAGAEIGNHRRWHGYQLVDGGRF). Residues Cys9, Cys12, Cys23, Cys26, Cys32, Cys35, His45, and His49 each contribute to the Zn(2+) site. Residues 65-118 (EAEGGWTSREEQLLLDAIEQFGFGNWEDMAAHVGASRTPTEVMEHYVTMYIHGN) form the SANT domain. Positions 303 to 333 (EESAEYEAARHKREKRKENKNIANSKRGRED) are disordered.

The protein localises to the nucleus. Transcriptional coactivator. The protein is Transcriptional adapter 2-beta (tada2b) of Xenopus laevis (African clawed frog).